Here is a 1136-residue protein sequence, read N- to C-terminus: Nuclear pore complex protein Nup133 (1136 aa).

Positions 1-26 (MFSPRGTPGSGRRQAPRTGGRRSVSA) are disordered.

The protein belongs to the nucleoporin Nup133 family. Forms part of the Nup160 subcomplex in the nuclear pore which is composed of NUP160, NUP133, NUP107 and Nup96. This complex plays a role in RNA export and in tethering Nup98 and NUP153 to the nucleus. In terms of tissue distribution, widely expressed in the embryo and in adult tissues. Higher expression is observed in the brain, testes, ovary, skin, and kidney.

The protein resides in the nucleus. It is found in the nuclear pore complex. Its subcellular location is the chromosome. The protein localises to the centromere. It localises to the kinetochore. In terms of biological role, involved in poly(A)+ RNA transport. Involved in nephrogenesis. The protein is Nuclear pore complex protein Nup133 of Danio rerio (Zebrafish).